The sequence spans 78 residues: Acyl carrier protein (78 aa).

One can recognise a Carrier domain in the interval 1 to 76 (MALFEDIQAV…DVVKYIEDNK (76 aa)). Residue Ser-36 is modified to O-(pantetheine 4'-phosphoryl)serine.

The protein belongs to the acyl carrier protein (ACP) family. Post-translationally, 4'-phosphopantetheine is transferred from CoA to a specific serine of apo-ACP by AcpS. This modification is essential for activity because fatty acids are bound in thioester linkage to the sulfhydryl of the prosthetic group.

It localises to the cytoplasm. Its pathway is lipid metabolism; fatty acid biosynthesis. In terms of biological role, carrier of the growing fatty acid chain in fatty acid biosynthesis. This chain is Acyl carrier protein, found in Helicobacter acinonychis (strain Sheeba).